Reading from the N-terminus, the 230-residue chain is Enolase-phosphatase E1 (230 aa).

The protein belongs to the HAD-like hydrolase superfamily. MasA/MtnC family. Monomer. Mg(2+) is required as a cofactor.

It carries out the reaction 5-methylsulfanyl-2,3-dioxopentyl phosphate + H2O = 1,2-dihydroxy-5-(methylsulfanyl)pent-1-en-3-one + phosphate. Its pathway is amino-acid biosynthesis; L-methionine biosynthesis via salvage pathway; L-methionine from S-methyl-5-thio-alpha-D-ribose 1-phosphate: step 3/6. It participates in amino-acid biosynthesis; L-methionine biosynthesis via salvage pathway; L-methionine from S-methyl-5-thio-alpha-D-ribose 1-phosphate: step 4/6. Its function is as follows. Bifunctional enzyme that catalyzes the enolization of 2,3-diketo-5-methylthiopentyl-1-phosphate (DK-MTP-1-P) into the intermediate 2-hydroxy-3-keto-5-methylthiopentenyl-1-phosphate (HK-MTPenyl-1-P), which is then dephosphorylated to form the acireductone 1,2-dihydroxy-3-keto-5-methylthiopentene (DHK-MTPene). In Sulfurihydrogenibium sp. (strain YO3AOP1), this protein is Enolase-phosphatase E1.